Here is a 319-residue protein sequence, read N- to C-terminus: tRNA uridine(34) hydroxylase (319 aa).

In terms of domain architecture, Rhodanese spans 127-221; it reads KQEDTVIIDA…YGKDPEVQGE (95 aa). Catalysis depends on C181, which acts as the Cysteine persulfide intermediate.

This sequence belongs to the TrhO family.

It catalyses the reaction uridine(34) in tRNA + AH2 + O2 = 5-hydroxyuridine(34) in tRNA + A + H2O. In terms of biological role, catalyzes oxygen-dependent 5-hydroxyuridine (ho5U) modification at position 34 in tRNAs. This is tRNA uridine(34) hydroxylase from Bacillus cereus (strain B4264).